A 250-amino-acid polypeptide reads, in one-letter code: Triosephosphate isomerase (250 aa).

Residue 9 to 11 (NWK) participates in substrate binding. H94 acts as the Electrophile in catalysis. The active-site Proton acceptor is the E166. Substrate-binding positions include G172, S212, and 233-234 (GG).

The protein belongs to the triosephosphate isomerase family. Homodimer.

It is found in the cytoplasm. It carries out the reaction D-glyceraldehyde 3-phosphate = dihydroxyacetone phosphate. Its pathway is carbohydrate biosynthesis; gluconeogenesis. It participates in carbohydrate degradation; glycolysis; D-glyceraldehyde 3-phosphate from glycerone phosphate: step 1/1. Its function is as follows. Involved in the gluconeogenesis. Catalyzes stereospecifically the conversion of dihydroxyacetone phosphate (DHAP) to D-glyceraldehyde-3-phosphate (G3P). The protein is Triosephosphate isomerase of Thermus thermophilus (strain ATCC 27634 / DSM 579 / HB8).